Consider the following 481-residue polypeptide: Glutamyl-tRNA(Gln) amidotransferase subunit A (481 aa).

Residues K76 and S151 each act as charge relay system in the active site. S175 (acyl-ester intermediate) is an active-site residue.

This sequence belongs to the amidase family. GatA subfamily. Heterotrimer of A, B and C subunits.

It carries out the reaction L-glutamyl-tRNA(Gln) + L-glutamine + ATP + H2O = L-glutaminyl-tRNA(Gln) + L-glutamate + ADP + phosphate + H(+). In terms of biological role, allows the formation of correctly charged Gln-tRNA(Gln) through the transamidation of misacylated Glu-tRNA(Gln) in organisms which lack glutaminyl-tRNA synthetase. The reaction takes place in the presence of glutamine and ATP through an activated gamma-phospho-Glu-tRNA(Gln). The polypeptide is Glutamyl-tRNA(Gln) amidotransferase subunit A (Neisseria gonorrhoeae (strain NCCP11945)).